A 566-amino-acid chain; its full sequence is 3'-5' exoribonuclease parn-1 (566 aa).

A divalent metal cation is bound by residues Asp-29, Glu-31, Asp-283, and Asp-379.

Belongs to the CAF1 family. A divalent metal cation is required as a cofactor. Expressed in germline cells.

It localises to the cytoplasm. Involved in transcriptome surveillance. Required for piwi-interacting RNAs (piRNAs) 3'-end trimming, which is important for both fertility and piRNA-directed gene silencing. Has 3' to 5' exonuclease activity in vitro. The polypeptide is 3'-5' exoribonuclease parn-1 (Caenorhabditis elegans).